Here is a 357-residue protein sequence, read N- to C-terminus: MSETANSRTTERKQDHIEICLHGDVVFNGKTTGFERFAFEHAALPEISFSDIDLSTSFLGKSIGAPLMISSMTGGYSEAATLNQRLAEAAERFGIPLGVGSMRQALENRSYRESFAVVRKYAPTVQIFANIGAPEVAKGLTESEINTMLELLRADGLIVHLNAAQELFQPEGNTDFRHVLEQLALLSAKIPVPVLVKEVGCGISASAARQLIAAGVKAIDVAGAGGISWQKVEEIRYTRQFGQERRFSLQALDELLNWGIPTAQCLIDIGALKKESPGLNGIEIVASGGVGSGMDVAKSLALGAQLAASARALLKALHDGVLEETITSWLNDLRAVMFLTGTATIAELRHKTLITKP.

Substrate is bound at residue 12–13 (RK). FMN-binding positions include Ser-70, 71–73 (SMT), Ser-101, and Asn-130. 101-103 (SMR) lines the substrate pocket. A substrate-binding site is contributed by Gln-165. Glu-166 lines the Mg(2+) pocket. Residues Lys-197 and 310–311 (AR) contribute to the FMN site.

Belongs to the IPP isomerase type 2 family. As to quaternary structure, homooctamer. Dimer of tetramers. It depends on FMN as a cofactor. NADPH serves as cofactor. Requires Mg(2+) as cofactor.

It localises to the cytoplasm. The catalysed reaction is isopentenyl diphosphate = dimethylallyl diphosphate. Its function is as follows. Involved in the biosynthesis of isoprenoids. Catalyzes the 1,3-allylic rearrangement of the homoallylic substrate isopentenyl (IPP) to its allylic isomer, dimethylallyl diphosphate (DMAPP). The polypeptide is Isopentenyl-diphosphate delta-isomerase (Pelodictyon phaeoclathratiforme (strain DSM 5477 / BU-1)).